Consider the following 131-residue polypeptide: Phosphoribosyl-AMP cyclohydrolase (131 aa).

Position 74 (D74) interacts with Mg(2+). C75 is a binding site for Zn(2+). D76 and D78 together coordinate Mg(2+). Zn(2+) is bound by residues C91 and C98.

It belongs to the PRA-CH family. In terms of assembly, homodimer. The cofactor is Mg(2+). Requires Zn(2+) as cofactor.

It is found in the cytoplasm. The catalysed reaction is 1-(5-phospho-beta-D-ribosyl)-5'-AMP + H2O = 1-(5-phospho-beta-D-ribosyl)-5-[(5-phospho-beta-D-ribosylamino)methylideneamino]imidazole-4-carboxamide. It functions in the pathway amino-acid biosynthesis; L-histidine biosynthesis; L-histidine from 5-phospho-alpha-D-ribose 1-diphosphate: step 3/9. Its function is as follows. Catalyzes the hydrolysis of the adenine ring of phosphoribosyl-AMP. This is Phosphoribosyl-AMP cyclohydrolase from Bradyrhizobium sp. (strain BTAi1 / ATCC BAA-1182).